Here is a 583-residue protein sequence, read N- to C-terminus: Poly [ADP-ribose] polymerase 2 (583 aa).

The tract at residues 1-77 (MAARRRRSTG…GMPGRSWASK (77 aa)) is disordered. An N-terminal region (NTR) region spans residues 1-103 (MAARRRRSTG…VDPECTAKVG (103 aa)). Short sequence motifs (nuclear localization signal) lie at residues 21–22 (KR) and 35–40 (PAKKTR). Lys-37 and Lys-38 each carry N6-acetyllysine. The span at 57–67 (ANKDRTEDKQD) shows a compositional bias: basic and acidic residues. The WGR domain occupies 104–201 (KAHVYCEGND…EKFEKVPGKY (98 aa)). 2 positions are modified to phosphoserine: Ser-226 and Ser-232. Residues 231 to 348 (ESQLDLRVQE…DIEIAIKLVK (118 aa)) form the PARP alpha-helical domain. A PARP catalytic domain is found at 356–583 (HPLDQHYRNL…KVQFNFLQLW (228 aa)). NAD(+)-binding positions include 428-430 (HGS), Gly-437, Arg-444, and Ser-470. The For poly [ADP-ribose] polymerase activity role is filled by Glu-558.

Belongs to the ARTD/PARP family. As to quaternary structure, component of a base excision repair (BER) complex, containing at least XRCC1, PARP1, POLB and LRIG3. Homo- and heterodimer with PARP1. Interacts (via the PARP catalytic domain) with HPF1. Interacts with core nucleosomes. Auto poly-ADP-ribosylated on serine residues, leading to dissociation of the PARP2-HPF1 complex from chromatin. Poly-ADP-ribosylated by PARP1. In terms of processing, acetylation reduces DNA binding and enzymatic activity. Post-translationally, proteolytically cleaved by caspase-8 (CASP8) in response to apoptosis, leading to its inactivation. In terms of tissue distribution, widely expressed, mainly in actively dividing tissues. The highest levels are in the brain, heart, pancreas, skeletal muscle and testis; also detected in kidney, liver, lung, placenta, ovary and spleen; levels are low in leukocytes, colon, small intestine, prostate and thymus.

It localises to the nucleus. The protein localises to the chromosome. The catalysed reaction is NAD(+) + (ADP-D-ribosyl)n-acceptor = nicotinamide + (ADP-D-ribosyl)n+1-acceptor + H(+).. It carries out the reaction L-seryl-[protein] + NAD(+) = O-(ADP-D-ribosyl)-L-seryl-[protein] + nicotinamide + H(+). The enzyme catalyses L-aspartyl-[protein] + NAD(+) = 4-O-(ADP-D-ribosyl)-L-aspartyl-[protein] + nicotinamide. It catalyses the reaction L-glutamyl-[protein] + NAD(+) = 5-O-(ADP-D-ribosyl)-L-glutamyl-[protein] + nicotinamide. ADP-ribosyltransferase activity is regulated via an allosteric activation mechanism. In absence of activation signal, PARP2 is autoinhibited by the PARP alpha-helical domain (also named HD region), which prevents effective NAD(+)-binding. Activity is highly stimulated by signals, which unfold the PARP alpha-helical domain, relieving autoinhibition. Poly-ADP-ribosyltransferase activity is tightly regulated and PARP2 is removed from damaged chromatin following initial poly-ADP-ribosylation of chromatin to avoid prolonged residence (trapping) that has cytotoxic consequences. CHD1L promotes PARP2 removal from chromatin. ADP-ribosyltransferase activity is inhibited by a number of PARP inhibitors (PARPi) compounds, that are used the treatment of breast or ovarian cancers that have defects in DNA repair by homologous recombination. PARPi molecules (niraparib, talazoparib, and, to a lesser extent, olaparib) also trap PARP2 at DNA damage sites. Its function is as follows. Poly-ADP-ribosyltransferase that mediates poly-ADP-ribosylation of proteins and plays a key role in DNA repair. Mediates glutamate, aspartate or serine ADP-ribosylation of proteins: the ADP-D-ribosyl group of NAD(+) is transferred to the acceptor carboxyl group of target residues and further ADP-ribosyl groups are transferred to the 2'-position of the terminal adenosine moiety, building up a polymer with an average chain length of 20-30 units. Serine ADP-ribosylation of proteins constitutes the primary form of ADP-ribosylation of proteins in response to DNA damage. Mediates glutamate and aspartate ADP-ribosylation of target proteins in absence of HPF1. Following interaction with HPF1, catalyzes serine ADP-ribosylation of target proteins; HPF1 conferring serine specificity by completing the PARP2 active site. PARP2 initiates the repair of double-strand DNA breaks: recognizes and binds DNA breaks within chromatin and recruits HPF1, licensing serine ADP-ribosylation of target proteins, such as histones, thereby promoting decompaction of chromatin and the recruitment of repair factors leading to the reparation of DNA strand breaks. HPF1 initiates serine ADP-ribosylation but restricts the polymerase activity of PARP2 in order to limit the length of poly-ADP-ribose chains. Specifically mediates formation of branched poly-ADP-ribosylation. Branched poly-ADP-ribose chains are specifically recognized by some factors, such as APLF. In addition to proteins, also able to ADP-ribosylate DNA: preferentially acts on 5'-terminal phosphates at DNA strand breaks termini in nicked duplex. This chain is Poly [ADP-ribose] polymerase 2, found in Homo sapiens (Human).